The following is a 1201-amino-acid chain: DNA-directed RNA polymerase subunit beta' (1201 aa).

Zn(2+) contacts are provided by Cys60, Cys62, Cys75, and Cys78. Mg(2+)-binding residues include Asp449, Asp451, and Asp453. 4 residues coordinate Zn(2+): Cys818, Cys892, Cys899, and Cys902.

Belongs to the RNA polymerase beta' chain family. The RNAP catalytic core consists of 2 alpha, 1 beta, 1 beta' and 1 omega subunit. When a sigma factor is associated with the core the holoenzyme is formed, which can initiate transcription. Requires Mg(2+) as cofactor. Zn(2+) is required as a cofactor.

It catalyses the reaction RNA(n) + a ribonucleoside 5'-triphosphate = RNA(n+1) + diphosphate. Functionally, DNA-dependent RNA polymerase catalyzes the transcription of DNA into RNA using the four ribonucleoside triphosphates as substrates. This chain is DNA-directed RNA polymerase subunit beta', found in Listeria welshimeri serovar 6b (strain ATCC 35897 / DSM 20650 / CCUG 15529 / CIP 8149 / NCTC 11857 / SLCC 5334 / V8).